The following is a 345-amino-acid chain: NADPH dehydrogenase (345 aa).

23 to 26 (SPMC) is an FMN binding site. Position 28 (Tyr-28) interacts with substrate. The FMN site is built by Ala-60 and Gln-102. 164-167 (HGAH) is a binding site for substrate. FMN is bound by residues Arg-215 and 307–308 (GR).

This sequence belongs to the NADH:flavin oxidoreductase/NADH oxidase family. NamA subfamily. Homotetramer. Requires FMN as cofactor.

The catalysed reaction is A + NADPH + H(+) = AH2 + NADP(+). Catalyzes the reduction of the double bond of an array of alpha,beta-unsaturated aldehydes and ketones. It also reduces the nitro group of nitroester and nitroaromatic compounds. It could have a role in detoxification processes. This Bacillus cereus (strain AH820) protein is NADPH dehydrogenase.